The sequence spans 284 residues: MEAIKKKMQMLKLDKENALDRAEQAEAEQKQAEERSKQLEDELAAMQKKLKGTEDELDKYSEALKDAQEKLELAEKKAADAEAEVASLNRRIQLVEEELDRAQERLATALQKLEEAEKAADESERGMKVIENRALKDEEKMELQEIQLKEAKHIAEEADRKYEEVARKLVIIEGDLERTEERAELAESKCSELEEELKNVTNNLKSLEAQAEKYSQKEDKYEEEIKILTDKLKEAETRAEFAERSVAKLEKTIDDLEDELYAQKLKYKAISEELDHALNDMTSI.

An N-acetylmethionine modification is found at M1. The tract at residues 1-43 (MEAIKKKMQMLKLDKENALDRAEQAEAEQKQAEERSKQLEDEL) is disordered. Positions 1-284 (MEAIKKKMQM…DHALNDMTSI (284 aa)) form a coiled coil. E2 carries the N-acetylalanine modification. Positions 12–40 (KLDKENALDRAEQAEAEQKQAEERSKQLE) are enriched in basic and acidic residues. Residue T53 is modified to Phosphothreonine. S61 and S87 each carry phosphoserine. T108 carries the phosphothreonine modification. Phosphoserine is present on residues S206 and S215. At L228 the chain carries N6-acetyllysine. The residue at position 252 (T252) is a Phosphothreonine. Y261 carries the post-translational modification Phosphotyrosine. Phosphoserine is present on S271. T282 bears the Phosphothreonine mark. At S283 the chain carries Phosphoserine.

This sequence belongs to the tropomyosin family. Homodimer. Heterodimer of an alpha (TPM1, TPM3 or TPM4) and a beta (TPM2) chain. Interacts with TMOD1. Interacts with TNNT1.

It is found in the cytoplasm. Its subcellular location is the cytoskeleton. Functionally, binds to actin filaments in muscle and non-muscle cells. Plays a central role, in association with the troponin complex, in the calcium dependent regulation of vertebrate striated muscle contraction. Smooth muscle contraction is regulated by interaction with caldesmon. In non-muscle cells is implicated in stabilizing cytoskeleton actin filaments. This chain is Tropomyosin alpha-3 chain (TPM3), found in Bos taurus (Bovine).